The primary structure comprises 745 residues: Copper-exporting P-type ATPase B (745 aa).

The tract at residues 1–76 (MNNGIDPENE…GMDHSHMDHE (76 aa)) is disordered. The Cytoplasmic portion of the chain corresponds to 1–108 (MNNGIDPENE…HMGNFKQKFW (108 aa)). Residues 36–76 (LQEHGKMENMDQHHTHGHMERHQQMDHGHMSGMDHSHMDHE) show a composition bias toward basic and acidic residues. Tandem repeats lie at residues 60–71 (MDHGHMSGMDHS), 73–84 (MDHEDMSGMNHS), and 86–97 (MGHENMSGMDHS). A 3 X 12 AA approximate repeats region spans residues 60–97 (MDHGHMSGMDHSHMDHEDMSGMNHSHMGHENMSGMDHS). Residues 109 to 128 (LSLILAIPIILFSPMMGMSF) traverse the membrane as a helical segment. The Extracellular portion of the chain corresponds to 129–139 (PFQVTFPGSNW). The helical transmembrane segment at 140–160 (VVLVLATILFIYGGQPFLSGA) threads the bilayer. Residues 161-170 (KMELKQKSPA) lie on the Cytoplasmic side of the membrane. The chain crosses the membrane as a helical span at residues 171-191 (MMTLIAMGITVAYVYSVYSFI). The Extracellular portion of the chain corresponds to 192-200 (ANLINPHTH). A helical membrane pass occupies residues 201–217 (VMDFFWELATLIVIMLL). At 218–359 (GHWIEMNAVS…EFLSDKVAKW (142 aa)) the chain is on the cytoplasmic side. A helical transmembrane segment spans residues 360–379 (LFYVALVVGIIAFIAWLFLA). Residues 380-388 (NLPDALERM) are Extracellular-facing. The helical transmembrane segment at 389-409 (VTVFIIACPHALGLAIPLVVA) threads the bilayer. Residues 410-703 (RSTSIAAKNG…QNLWWGAGYN (294 aa)) are Cytoplasmic-facing. The active-site 4-aspartylphosphate intermediate is the aspartate 440. Mg(2+) is bound by residues aspartate 638 and aspartate 642. A helical membrane pass occupies residues 704 to 721 (IIAIPLAAGILAPIGLIL). At 722 to 723 (SP) the chain is on the extracellular side. The chain crosses the membrane as a helical span at residues 724-744 (AVGAVLMSLSTVVVALNALTL). Residue lysine 745 is a topological domain, cytoplasmic.

It belongs to the cation transport ATPase (P-type) (TC 3.A.3) family. Type IB subfamily. Monomer.

The protein resides in the cell membrane. The enzyme catalyses Cu(+)(in) + ATP + H2O = Cu(+)(out) + ADP + phosphate + H(+). Inhibited by vanadate. Involved in copper export. Can also export silver. This is Copper-exporting P-type ATPase B (copB) from Enterococcus hirae (strain ATCC 9790 / DSM 20160 / JCM 8729 / LMG 6399 / NBRC 3181 / NCIMB 6459 / NCDO 1258 / NCTC 12367 / WDCM 00089 / R).